Here is a 154-residue protein sequence, read N- to C-terminus: SsrA-binding protein (154 aa).

Belongs to the SmpB family.

The protein resides in the cytoplasm. Required for rescue of stalled ribosomes mediated by trans-translation. Binds to transfer-messenger RNA (tmRNA), required for stable association of tmRNA with ribosomes. tmRNA and SmpB together mimic tRNA shape, replacing the anticodon stem-loop with SmpB. tmRNA is encoded by the ssrA gene; the 2 termini fold to resemble tRNA(Ala) and it encodes a 'tag peptide', a short internal open reading frame. During trans-translation Ala-aminoacylated tmRNA acts like a tRNA, entering the A-site of stalled ribosomes, displacing the stalled mRNA. The ribosome then switches to translate the ORF on the tmRNA; the nascent peptide is terminated with the 'tag peptide' encoded by the tmRNA and targeted for degradation. The ribosome is freed to recommence translation, which seems to be the essential function of trans-translation. In Enterococcus hirae (strain ATCC 9790 / DSM 20160 / JCM 8729 / LMG 6399 / NBRC 3181 / NCIMB 6459 / NCDO 1258 / NCTC 12367 / WDCM 00089 / R), this protein is SsrA-binding protein.